Here is a 458-residue protein sequence, read N- to C-terminus: Bifunctional protein GlmU (458 aa).

The pyrophosphorylase stretch occupies residues 1–230 (MSLPTYSKLN…EWQVAGINSK (230 aa)). UDP-N-acetyl-alpha-D-glucosamine is bound by residues 14–17 (LAAG), Lys28, Gln79, and 84–85 (GT). Residue Asp108 participates in Mg(2+) binding. UDP-N-acetyl-alpha-D-glucosamine contacts are provided by Gly141, Glu155, Asn170, and Asn228. Asn228 is a binding site for Mg(2+). Positions 231–251 (QDLAALERVYQGRYAARLLAK) are linker. Residues 252–458 (GVTLADPSRI…NWKRPEKVKK (207 aa)) form an N-acetyltransferase region. UDP-N-acetyl-alpha-D-glucosamine is bound by residues Arg334 and Lys352. Residue His364 is the Proton acceptor of the active site. Tyr367 and Asn378 together coordinate UDP-N-acetyl-alpha-D-glucosamine. Residues Ala381, 387 to 388 (NY), Ser406, Ala424, and Arg441 contribute to the acetyl-CoA site.

The protein in the N-terminal section; belongs to the N-acetylglucosamine-1-phosphate uridyltransferase family. This sequence in the C-terminal section; belongs to the transferase hexapeptide repeat family. In terms of assembly, homotrimer. Mg(2+) serves as cofactor.

It localises to the cytoplasm. The catalysed reaction is alpha-D-glucosamine 1-phosphate + acetyl-CoA = N-acetyl-alpha-D-glucosamine 1-phosphate + CoA + H(+). It catalyses the reaction N-acetyl-alpha-D-glucosamine 1-phosphate + UTP + H(+) = UDP-N-acetyl-alpha-D-glucosamine + diphosphate. It functions in the pathway nucleotide-sugar biosynthesis; UDP-N-acetyl-alpha-D-glucosamine biosynthesis; N-acetyl-alpha-D-glucosamine 1-phosphate from alpha-D-glucosamine 6-phosphate (route II): step 2/2. The protein operates within nucleotide-sugar biosynthesis; UDP-N-acetyl-alpha-D-glucosamine biosynthesis; UDP-N-acetyl-alpha-D-glucosamine from N-acetyl-alpha-D-glucosamine 1-phosphate: step 1/1. Its pathway is bacterial outer membrane biogenesis; LPS lipid A biosynthesis. In terms of biological role, catalyzes the last two sequential reactions in the de novo biosynthetic pathway for UDP-N-acetylglucosamine (UDP-GlcNAc). The C-terminal domain catalyzes the transfer of acetyl group from acetyl coenzyme A to glucosamine-1-phosphate (GlcN-1-P) to produce N-acetylglucosamine-1-phosphate (GlcNAc-1-P), which is converted into UDP-GlcNAc by the transfer of uridine 5-monophosphate (from uridine 5-triphosphate), a reaction catalyzed by the N-terminal domain. This chain is Bifunctional protein GlmU, found in Methylobacillus flagellatus (strain ATCC 51484 / DSM 6875 / VKM B-1610 / KT).